The chain runs to 771 residues: Post-GPI attachment to proteins factor 6 (771 aa).

Positions 1 to 34 (MGRAGTGTGGEAVAAVVAGPLLLLLLARPPPASA) are cleaved as a signal peptide. Residues 35-545 (GYSGKSEVGL…STAQTVAQQR (511 aa)) lie on the Extracellular side of the membrane. N-linked (GlcNAc...) asparagine glycosylation is present at asparagine 144. The segment at 322–343 (FNASSGLLSPSPDHQDLGRSGR) is disordered. A compositionally biased stretch (basic and acidic residues) spans 334–343 (DHQDLGRSGR). 2 N-linked (GlcNAc...) asparagine glycosylation sites follow: asparagine 407 and asparagine 431. One can recognise an EGF-like domain in the interval 497 to 533 (PCLNDCGPYGQCLLLRRHSYLYASCSCKAGWRGWSCT). 3 cysteine pairs are disulfide-bonded: cysteine 498-cysteine 508, cysteine 502-cysteine 521, and cysteine 523-cysteine 532. The chain crosses the membrane as a helical span at residues 546–566 (AATLLLTLSNLMFLAPIAVSV). The Cytoplasmic segment spans residues 567–568 (RR). A helical membrane pass occupies residues 569–589 (FFLVEASVYAYTMFFSTFYHA). At 590–605 (CDQPGEAVLCILSYDT) the chain is on the extracellular side. Residues 606–626 (LQYCDFLGSGAAIWVTILCMA) form a helical membrane-spanning segment. Residues 627–629 (RLK) are Cytoplasmic-facing. A helical transmembrane segment spans residues 630–650 (TVLKYVLFLLGTLVIAMSLQL). Residues 651 to 653 (DRR) are Extracellular-facing. The chain crosses the membrane as a helical span at residues 654–674 (GMWNMLGPCLFAFVIMASMWA). Residues 675 to 690 (YRCGHRRQCYPTSWQR) are Cytoplasmic-facing. A helical membrane pass occupies residues 691 to 711 (WAFYLLPGVSMASVGIAIYTS). The Extracellular portion of the chain corresponds to 712 to 717 (MMTSDN). The chain crosses the membrane as a helical span at residues 718-738 (YYYTHSIWHILLAGSAALLLP). Residues 739 to 771 (PPDQPAEPWACSQKFPCHYQICKNDREELYAVT) are Cytoplasmic-facing.

Belongs to the TMEM8 family. Glycosylated. As to expression, expressed in pancreas, placenta, spleen, liver, kidney, bone marrow, peripheral blood leukocytes and tonsil.

The protein resides in the cell membrane. It is found in the lysosome membrane. The catalysed reaction is a 1,2-diacyl-sn-glycero-3-phosphocholine + H2O = a 1-acyl-sn-glycero-3-phosphocholine + a fatty acid + H(+). Its function is as follows. Involved in the lipid remodeling steps of GPI-anchor maturation. Lipid remodeling steps consist in the generation of 2 saturated fatty chains at the sn-2 position of GPI-anchor proteins (GPI-AP). Has phospholipase A2 activity that removes an acyl-chain at the sn-2 position of GPI-anchors during the remodeling of GPI. Required for the shedding of the GPI-AP CRIPTO, but not CFC1, at the cell surface. Shedding of CRIPTO modulates Nodal signaling by allowing soluble CRIPTO to act as a Nodal coreceptor on other cells. Also indirectly involved in the translocation of RAC1 from the cytosol to the plasma membrane by maintaining the steady state amount of CAV1-enriched plasma membrane subdomains, stabilizing RAC1 at the plasma membrane. In contrast to myomaker (TMEM8C), has no fusogenic activity. The sequence is that of Post-GPI attachment to proteins factor 6 from Homo sapiens (Human).